Consider the following 424-residue polypeptide: Endoglucanase (424 aa).

The N-terminal stretch at 1–19 (MHRCMPLVAASMAALMLAG) is a signal peptide. Cys20 carries N-palmitoyl cysteine lipidation. Cys20 is lipidated: S-diacylglycerol cysteine. Positions 20-43 (CGGGDGDTTLSTAAATDTTTLKTA) are excised as a propeptide. The active-site Proton donor is Glu247. Glu359 functions as the Nucleophile in the catalytic mechanism.

Belongs to the glycosyl hydrolase 5 (cellulase A) family.

The protein localises to the cell membrane. It carries out the reaction Endohydrolysis of (1-&gt;4)-beta-D-glucosidic linkages in cellulose, lichenin and cereal beta-D-glucans.. This chain is Endoglucanase (egl), found in Ralstonia nicotianae (strain ATCC BAA-1114 / GMI1000) (Ralstonia solanacearum).